Reading from the N-terminus, the 284-residue chain is Tropomyosin (284 aa).

N-acetylmethionine is present on M1. 2 disordered regions span residues 1–49 and 103–126; these read MDAI…NQKK and EERL…SERM. A coiled-coil region spans residues 1–284; sequence MDAIKKKMQA…DQAFSELSGF (284 aa). Residues 12–45 show a composition bias toward basic and acidic residues; sequence KLEKDNAMDKADTLEQQNKEANLRAEKTEEEIRA.

It belongs to the tropomyosin family. In terms of assembly, homodimer. In terms of tissue distribution, expressed in leg muscle and chest protection muscle (at protein level).

Tropomyosin, in association with the troponin complex, plays a central role in the calcium dependent regulation of muscle contraction. The polypeptide is Tropomyosin (Chionoecetes opilio (Atlantic snow crab)).